The following is a 142-amino-acid chain: Hemoglobin subunit alpha-A (142 aa).

Residues V2 to R142 form the Globin domain. H59 contributes to the O2 binding site. A heme b-binding site is contributed by H88.

The protein belongs to the globin family. In terms of assembly, heterotetramer of two alpha chains and two beta chains. In terms of tissue distribution, red blood cells.

In terms of biological role, involved in oxygen transport from the lung to the various peripheral tissues. The sequence is that of Hemoglobin subunit alpha-A (HBAA) from Cairina moschata (Muscovy duck).